A 579-amino-acid chain; its full sequence is Arginine--tRNA ligase (579 aa).

The short motif at 123-133 (ANPTGPVHVGR) is the 'HIGH' region element.

Belongs to the class-I aminoacyl-tRNA synthetase family.

Its subcellular location is the cytoplasm. The catalysed reaction is tRNA(Arg) + L-arginine + ATP = L-arginyl-tRNA(Arg) + AMP + diphosphate. The protein is Arginine--tRNA ligase of Haloarcula marismortui (strain ATCC 43049 / DSM 3752 / JCM 8966 / VKM B-1809) (Halobacterium marismortui).